A 430-amino-acid chain; its full sequence is MVNAVVTTPSRVESLAKSGIQAIPKEYVRPQEELNGIGNIFEEEKKDEGPQVPTIDLKEIDSEDKEIREKCHQLKKAAMEWGVMHLVNHGISDELINRVKVAGETFFDQPVEEKEKYANDQANGNVQGYGSKLANSACGQLEWEDYFFHCAFPEDKRDLSIWPKNPTDYTPATSEYAKQIRALATKILTVLSIGLGLEEGRLEKEVGGMEDLLLQMKINYYPKCPQPELALGVEAHTDVSALTFILHNMVPGLQLFYEGQWVTAKCVPNSIIMHIGDTIEILSNGKYKSILHRGVVNKEKVRFSWAIFCEPPKEKIILKPLPETVTEAEPPRFPPRTFAQHMAHKLFRKDDKDAAVEHKVFNEDELDTAAEHKVLKKDNQDAVAENKDIKEDEQCGPAEHKDIKEDGQGAAAENKVFKENNQDVAAEESK.

The Fe2OG dioxygenase domain maps to 212 to 311 (LLLQMKINYY…RFSWAIFCEP (100 aa)). Histidine 236, aspartate 238, and histidine 292 together coordinate Fe cation. Composition is skewed to basic and acidic residues over residues 376–407 (KKDN…KEDG) and 415–430 (KVFK…EESK). The segment at 376 to 430 (KKDNQDAVAENKDIKEDEQCGPAEHKDIKEDGQGAAAENKVFKENNQDVAAEESK) is disordered.

Belongs to the iron/ascorbate-dependent oxidoreductase family. It depends on Fe cation as a cofactor. Requires L-ascorbate as cofactor. As to expression, predominantly expressed in corollas and at lower levels in anthers.

It catalyses the reaction a (2R,3S,4S)-leucoanthocyanidin + 2-oxoglutarate + O2 = a 4-H-anthocyanidin with a 3-hydroxy group + succinate + CO2 + 2 H2O. Its pathway is pigment biosynthesis; anthocyanin biosynthesis. Oxidation of leucoanthocyanidins into anthocyanidins. This Petunia hybrida (Petunia) protein is Leucoanthocyanidin dioxygenase (ANT17).